The following is a 142-amino-acid chain: Transcriptional regulator MraZ (142 aa).

SpoVT-AbrB domains lie at 5-47 (EYNH…PMEE) and 76-119 (ANEI…SREK).

This sequence belongs to the MraZ family. As to quaternary structure, forms oligomers.

The protein resides in the cytoplasm. It localises to the nucleoid. This is Transcriptional regulator MraZ from Clostridium tetani (strain Massachusetts / E88).